Here is a 583-residue protein sequence, read N- to C-terminus: Propane 2-monooxygenase operon transcriptional activator MimR (583 aa).

One can recognise a Sigma-54 factor interaction domain in the interval 320 to 513 (LAGRSSSFRR…LRHVLTETLR (194 aa)). ATP-binding positions include 348–355 (GEKGSGRT) and 395–404 (DADFAVIVAD).

Functionally, acts as a transcriptional activator of the mimABCD operon encoding the propane 2-monooxygenase complex. This Mycolicibacterium goodii (Mycobacterium goodii) protein is Propane 2-monooxygenase operon transcriptional activator MimR.